Consider the following 935-residue polypeptide: GPI ethanolamine phosphate transferase 1 (935 aa).

Over 1 to 5 (MFGRL) the chain is Cytoplasmic. Residues 6-26 (LLLGILFHVVFLKSIFDIYFV) traverse the membrane as a helical segment. The Lumenal segment spans residues 27-449 (TPLIHGMKQY…LQRYDWLLLR (423 aa)). N-linked (GlcNAc...) asparagine glycosylation is found at Asn86, Asn134, Asn315, and Asn398. The helical transmembrane segment at 450 to 470 (SIVFFGYLSWIGYVICFVFSL) threads the bilayer. The Cytoplasmic portion of the chain corresponds to 471–483 (NIEPSSKIVKPVS). The chain crosses the membrane as a helical span at residues 484–503 (VVKRVAFNIPFLLICIFFYI). The Lumenal portion of the chain corresponds to 504-509 (QSSPPF). Residues 510-530 (YYGYALFPTIFLQLIHSIFPN) traverse the membrane as a helical segment. The Cytoplasmic segment spans residues 531 to 547 (TKLGFKNFLTVAKQKHG). Residues 548-568 (FSLLKILFISLCILCLLQFIV) form a helical membrane-spanning segment. Over 569 to 576 (YSYFHREG) the chain is Lumenal. A helical membrane pass occupies residues 577–597 (FSVILMGLAAWPWLLHADYAF). Over 598-600 (SHK) the chain is Cytoplasmic. Residues 601–621 (TISVSWSVLTSLLCFFTILPV) form a helical membrane-spanning segment. At 622–626 (NKKES) the chain is on the lumenal side. A helical transmembrane segment spans residues 627–647 (LLFIFAGGFAMSVAGVFYILY). At 648-663 (RRNQAFQYSSTVTNKQ) the chain is on the cytoplasmic side. Residues 664–684 (LVLQVLIIMATVPVTLKIADS) form a helical membrane-spanning segment. The Lumenal segment spans residues 685–688 (LQRN). Residues 689 to 709 (IAIPPILRLVAFGLFITSYII) traverse the membrane as a helical segment. The Cytoplasmic portion of the chain corresponds to 710–737 (PSHHIRSCKHYFLDRLAILFLTFSPTMC). Residues 738–758 (MLSISFEALFYVVLFITLGLW) traverse the membrane as a helical segment. At 759-792 (MELETELQKYTEQLHPEYSRKKDAKFHLSLSHIR) the chain is on the lumenal side. The helical transmembrane segment at 793 to 813 (ISLFFYIFINVAFFGTGNVAS) threads the bilayer. Over 814-835 (LSTFALDSVKRFIPVFNPVTQG) the chain is Cytoplasmic. A helical transmembrane segment spans residues 836-856 (ALLMYTILVPFIALSAAFGIM). Residues 857-865 (NKRLGGIQQ) lie on the Lumenal side of the membrane. The chain crosses the membrane as a helical span at residues 866-886 (VTFFLAVGMADIVTINFFYLV). Over 887 to 894 (KDEGSWKD) the chain is Cytoplasmic. The chain crosses the membrane as a helical span at residues 895–915 (IGVSISHFCISNFLILFITAL). Over 916 to 935 (EHASAILCKNITYTIHEKVN) the chain is Lumenal. N-linked (GlcNAc...) asparagine glycosylation occurs at Asn925.

It belongs to the PIGG/PIGN/PIGO family. PIGN subfamily.

It localises to the endoplasmic reticulum membrane. It participates in glycolipid biosynthesis; glycosylphosphatidylinositol-anchor biosynthesis. Ethanolamine phosphate transferase involved in glycosylphosphatidylinositol-anchor biosynthesis. Transfers ethanolamine phosphate to the first alpha-1,4-linked mannose of the glycosylphosphatidylinositol precursor of GPI-anchor. The protein is GPI ethanolamine phosphate transferase 1 (its8) of Schizosaccharomyces pombe (strain 972 / ATCC 24843) (Fission yeast).